Reading from the N-terminus, the 318-residue chain is ATP phosphoribosyltransferase regulatory subunit (318 aa).

It belongs to the class-II aminoacyl-tRNA synthetase family. HisZ subfamily. As to quaternary structure, heteromultimer composed of HisG and HisZ subunits.

The protein resides in the cytoplasm. It participates in amino-acid biosynthesis; L-histidine biosynthesis; L-histidine from 5-phospho-alpha-D-ribose 1-diphosphate: step 1/9. In terms of biological role, required for the first step of histidine biosynthesis. May allow the feedback regulation of ATP phosphoribosyltransferase activity by histidine. This chain is ATP phosphoribosyltransferase regulatory subunit, found in Lactococcus lactis subsp. cremoris (strain SK11).